Here is a 293-residue protein sequence, read N- to C-terminus: Glutamyl-Q tRNA(Asp) synthetase (293 aa).

L-glutamate is bound by residues 8 to 12 (RFAPT) and glutamate 44. Residues 11 to 21 (PTPSGYLHFGS) carry the 'HIGH' region motif. Residues cysteine 100, cysteine 102, tyrosine 114, and cysteine 118 each coordinate Zn(2+). Residues tyrosine 171 and arginine 189 each coordinate L-glutamate. The short motif at 227–231 (KLGKS) is the 'KMSKS' region element. Position 230 (lysine 230) interacts with ATP.

It belongs to the class-I aminoacyl-tRNA synthetase family. GluQ subfamily. Requires Zn(2+) as cofactor.

Its function is as follows. Catalyzes the tRNA-independent activation of glutamate in presence of ATP and the subsequent transfer of glutamate onto a tRNA(Asp). Glutamate is transferred on the 2-amino-5-(4,5-dihydroxy-2-cyclopenten-1-yl) moiety of the queuosine in the wobble position of the QUC anticodon. This is Glutamyl-Q tRNA(Asp) synthetase from Pseudomonas aeruginosa (strain LESB58).